The chain runs to 109 residues: Thioredoxin (109 aa).

In terms of domain architecture, Thioredoxin spans 2-107; the sequence is SISQVIDTSF…LLNTLQKHLK (106 aa). Active-site nucleophile residues include cysteine 31 and cysteine 34. An intrachain disulfide couples cysteine 31 to cysteine 34.

Belongs to the thioredoxin family.

The protein resides in the plastid. Its subcellular location is the chloroplast. Functionally, participates in various redox reactions through the reversible oxidation of its active center dithiol to a disulfide and catalyzes dithiol-disulfide exchange reactions. The polypeptide is Thioredoxin (trxA) (Griffithsia pacifica (Red alga)).